The primary structure comprises 200 residues: Small ribosomal subunit protein uS4 (200 aa).

Residues 22–42 form a disordered region; that stretch reads TGKELEKRPYAPGPHGPNQRK. The region spanning 92–152 is the S4 RNA-binding domain; the sequence is ARLDNLVYRM…EKSRNLAVIK (61 aa).

The protein belongs to the universal ribosomal protein uS4 family. Part of the 30S ribosomal subunit. Contacts protein S5. The interaction surface between S4 and S5 is involved in control of translational fidelity.

One of the primary rRNA binding proteins, it binds directly to 16S rRNA where it nucleates assembly of the body of the 30S subunit. Functionally, with S5 and S12 plays an important role in translational accuracy. The polypeptide is Small ribosomal subunit protein uS4 (Bacillus cytotoxicus (strain DSM 22905 / CIP 110041 / 391-98 / NVH 391-98)).